A 491-amino-acid chain; its full sequence is ADP-specific phosphofructokinase (491 aa).

The 483-residue stretch at 4 to 486 (EEWEQRHAEA…FVAMLAKIKQ (483 aa)) folds into the ADPK domain. Residues glutamate 281, glutamate 312, and aspartate 470 each contribute to the Mg(2+) site. Residue aspartate 470 is the Proton acceptor of the active site.

It belongs to the carbohydrate kinase PfkC family. It depends on Mg(2+) as a cofactor.

Its subcellular location is the cytoplasm. It carries out the reaction beta-D-fructose 6-phosphate + ADP = beta-D-fructose 1,6-bisphosphate + AMP + H(+). Its pathway is carbohydrate degradation; glycolysis. In terms of biological role, catalyzes the phosphorylation of fructose 6-phosphate to fructose 1,6-bisphosphate using ADP as the phosphate donor. This chain is ADP-specific phosphofructokinase, found in Methanosarcina acetivorans (strain ATCC 35395 / DSM 2834 / JCM 12185 / C2A).